Reading from the N-terminus, the 414-residue chain is Putative competence-damage inducible protein (414 aa).

This sequence belongs to the CinA family.

This Listeria monocytogenes serovar 1/2a (strain ATCC BAA-679 / EGD-e) protein is Putative competence-damage inducible protein.